A 229-amino-acid chain; its full sequence is Apoptosis regulator Bcl-2 (229 aa).

The BH4 signature appears at 10-30 (DNREIVMKYIHYKLSQRGYEW). The tract at residues 30 to 82 (WDAGDAGAAPPGAAPAPGILSSQPGRTPAPSRTSPPPPPAAAAGPAPSPVPPV) is disordered. Residues 33-61 (GDAGAAPPGAAPAPGILSSQPGRTPAPSR) show a composition bias toward low complexity. Threonine 62 is modified (phosphothreonine; by MAPK8). The span at 62–81 (TSPPPPPAAAAGPAPSPVPP) shows a compositional bias: pro residues. The residue at position 63 (serine 63) is a Phosphoserine; by MAPK8 and PKC. Position 77 is a phosphoserine; by MAPK8 (serine 77). Residues 83–97 (VHLTLRQAGDDFSRR) carry the BH3 motif. The BH1 motif lies at 126–145 (ELFRDGVNWGRIVAFFEFGG). Residues 177 to 192 (TWIQDNGGWDAFVELY) carry the BH2 motif. Residues 202-223 (FSWLSLKALLSLALVGACITLG) traverse the membrane as a helical segment.

It belongs to the Bcl-2 family. Forms homodimers, and heterodimers with BAX, BAD, BAK and Bcl-X(L). Heterodimerization with BAX requires intact BH1 and BH2 motifs, and is necessary for anti-apoptotic activity. Component of the complex, at least composed of LRPPRC, BECN1 and BCL2; the interactions prevent BECN1 from forming an autophagy-inducing complex with PIK3C3. Interacts with EI24. Also interacts with APAF1, BBC3, BCL2L1, BNIPL, MRPL41 and TP53BP2. Binding to FKBP8 seems to target BCL2 to the mitochondria and probably interferes with the binding of BCL2 to its targets. Interacts with BAG1 in an ATP-dependent manner. Interacts with RAF1 (the 'Ser-338' and 'Ser-339' phosphorylated form). Interacts (via the BH4 domain) with EGLN3; the interaction prevents the formation of the BAX-BCL2 complex and inhibits the anti-apoptotic activity of BCL2. Interacts with G0S2; this interaction also prevents the formation of the anti-apoptotic BAX-BCL2 complex. Interacts with RTL10/BOP. Interacts with the SCF(FBXO10) complex. Interacts (via the loop between motifs BH4 and BH3) with NLRP1 (via LRR repeats), but not with NLRP2, NLRP3, NLRP4, PYCARD, nor MEFV. Interacts with GIMAP3/IAN4, GIMAP4/IAN1 and GIMAP5/IAN5. Interacts with BCAP31. Interacts with IRF3; the interaction is inhibited by Sendai virus infection. Interacts with BECN1; thereby inhibiting autophagy in non-starvation conditions. Interacts with AMBRA1; thereby inhibiting autophagy. In terms of processing, phosphorylation/dephosphorylation on Ser-63 regulates anti-apoptotic activity. Growth factor-stimulated phosphorylation on Ser-63 by PKC is required for the anti-apoptosis activity and occurs during the G2/M phase of the cell cycle. In the absence of growth factors, BCL2 appears to be phosphorylated by other protein kinases such as ERKs and stress-activated kinases. Phosphorylated by MAPK8/JNK1 at Thr-62, Ser-63 and Ser-77, which stimulates starvation-induced autophagy. Dephosphorylated by protein phosphatase 2A (PP2A). Post-translationally, proteolytically cleaved by caspases during apoptosis. The cleaved protein, lacking the BH4 motif, has pro-apoptotic activity, causes the release of cytochrome c into the cytosol promoting further caspase activity. Monoubiquitinated by PRKN, leading to an increase in its stability. Ubiquitinated by SCF(FBXO10), leading to its degradation by the proteasome.

It localises to the mitochondrion outer membrane. Its subcellular location is the nucleus membrane. It is found in the endoplasmic reticulum membrane. The protein localises to the cytoplasm. In terms of biological role, suppresses apoptosis in a variety of cell systems including factor-dependent lymphohematopoietic and neural cells. Regulates cell death by controlling the mitochondrial membrane permeability. Appears to function in a feedback loop system with caspases. Inhibits caspase activity either by preventing the release of cytochrome c from the mitochondria and/or by binding to the apoptosis-activating factor (APAF-1). Also acts as an inhibitor of autophagy: interacts with BECN1 and AMBRA1 during non-starvation conditions and inhibits their autophagy function. May attenuate inflammation by impairing NLRP1-inflammasome activation, hence CASP1 activation and IL1B release. The polypeptide is Apoptosis regulator Bcl-2 (BCL2) (Bos taurus (Bovine)).